The primary structure comprises 409 residues: Tryptophan synthase beta chain (409 aa).

Lys-98 carries the N6-(pyridoxal phosphate)lysine modification.

Belongs to the TrpB family. In terms of assembly, tetramer of two alpha and two beta chains. It depends on pyridoxal 5'-phosphate as a cofactor.

The catalysed reaction is (1S,2R)-1-C-(indol-3-yl)glycerol 3-phosphate + L-serine = D-glyceraldehyde 3-phosphate + L-tryptophan + H2O. The protein operates within amino-acid biosynthesis; L-tryptophan biosynthesis; L-tryptophan from chorismate: step 5/5. Functionally, the beta subunit is responsible for the synthesis of L-tryptophan from indole and L-serine. This is Tryptophan synthase beta chain (trpB) from Cereibacter sphaeroides (strain ATCC 17023 / DSM 158 / JCM 6121 / CCUG 31486 / LMG 2827 / NBRC 12203 / NCIMB 8253 / ATH 2.4.1.) (Rhodobacter sphaeroides).